Here is a 414-residue protein sequence, read N- to C-terminus: uncharacterized protein (414 aa).

Residues 87–117 (KTNDDNKTNGRETHLRPSPSKPEYTGRPTQN) form a disordered region. The segment covering 88–101 (TNDDNKTNGRETHL) has biased composition (basic and acidic residues). A coiled-coil region spans residues 243–405 (SMLQSSIDKL…RNKLEMEVER (163 aa)).

This is an uncharacterized protein from Encephalitozoon cuniculi (strain GB-M1) (Microsporidian parasite).